The primary structure comprises 659 residues: Hemocyanin subunit B (659 aa).

The signal sequence occupies residues 1–18 (MVAKWCVLAMCLLVAVGA). 3 residues coordinate Cu cation: histidine 198, histidine 202, and histidine 232. A glycan (N-linked (GlcNAc...) asparagine) is linked at asparagine 318. Cu cation-binding residues include histidine 353, histidine 357, and histidine 393. Cysteine 562 and cysteine 609 are disulfide-bonded.

It belongs to the tyrosinase family. Hemocyanin subfamily. In terms of assembly, 36-chain polymer consisting of 6 hexamers, each of which includes 4 different chains, A, B, C and D. Hemolymph.

It localises to the secreted. The protein localises to the extracellular space. Hemocyanins are copper-containing oxygen carriers occurring freely dissolved in the hemolymph of many mollusks and arthropods. The sequence is that of Hemocyanin subunit B (HCB) from Scutigera coleoptrata (House centipede).